The sequence spans 775 residues: K(+)-insensitive pyrophosphate-energized proton pump (775 aa).

5 helical membrane-spanning segments follow: residues 9 to 29 (SLAV…AFFI), 65 to 85 (ISIL…IIPP), 108 to 128 (AVAF…GMNV), 160 to 180 (MLTV…FGIA), and 185 to 205 (LLGF…GGGI). Substrate is bound at residue K208. D211, D215, and D241 together coordinate Mg(2+). Helical transmembrane passes span 259–279 (VTLV…VGTI), 288–308 (FIIF…IGNL), 327–347 (FYIA…VFMV), 359–379 (FFAT…TEYF), 413–433 (SVWA…IYAG), and 442–462 (AILY…GNTI). D472 lines the Mg(2+) pocket. The next 4 helical transmembrane spans lie at 508–528 (IAIG…FTDV), 555–575 (PVFI…ALTI), 622–642 (LISL…TLGV), and 644–664 (ALGG…VFQA). Residues D671, D697, and D701 each contribute to the Ca(2+) site. Position 704 (K704) interacts with substrate. Transmembrane regions (helical) follow at residues 710 to 730 (ALNP…PIVV) and 735 to 755 (GSPG…WAIW).

It belongs to the H(+)-translocating pyrophosphatase (TC 3.A.10) family. K(+)-insensitive subfamily. Homodimer. The cofactor is Mg(2+).

It localises to the cell membrane. The catalysed reaction is diphosphate + H2O + H(+)(in) = 2 phosphate + 2 H(+)(out). Functionally, proton pump that utilizes the energy of pyrophosphate hydrolysis as the driving force for proton movement across the membrane. Generates a proton motive force. This is K(+)-insensitive pyrophosphate-energized proton pump from Chloroflexus aurantiacus (strain ATCC 29366 / DSM 635 / J-10-fl).